Consider the following 289-residue polypeptide: Oxaloacetate decarboxylase 1 (289 aa).

Residue Ser-50 coordinates substrate. Asp-88 lines the Mg(2+) pocket. Substrate-binding residues include Arg-159 and His-235.

This sequence belongs to the isocitrate lyase/PEP mutase superfamily. Oxaloacetate decarboxylase family. Homotetramer; dimer of dimers. Requires Mg(2+) as cofactor.

It catalyses the reaction oxaloacetate + H(+) = pyruvate + CO2. Its function is as follows. Catalyzes the decarboxylation of oxaloacetate into pyruvate. Seems to play a role in maintaining cellular concentrations of bicarbonate and pyruvate. The protein is Oxaloacetate decarboxylase 1 of Pseudomonas fluorescens (strain Pf0-1).